A 346-amino-acid polypeptide reads, in one-letter code: Fusaric acid resistance protein FusC (346 aa).

4 consecutive transmembrane segments (helical) span residues 10-30 (VIIG…RYTG), 248-268 (VILA…VMLV), 291-311 (MGMG…GIYP), and 315-335 (GFVL…YMSL).

The protein belongs to the aromatic acid exporter ArAE (TC 2.A.85) family.

It is found in the cell membrane. In terms of biological role, involved in the resistance (detoxification) of the fungal toxin fusaric acid. This is Fusaric acid resistance protein FusC (fusC) from Burkholderia cepacia (Pseudomonas cepacia).